The primary structure comprises 277 residues: Proteasome subunit beta type-7 (277 aa).

The propeptide at 1-43 is removed in mature form; it reads MAAVSVFQAPVGGFSFDNCRRNAVLEADFAKKGFKLPKARKTG. The active-site Nucleophile is the Thr44.

It belongs to the peptidase T1B family. As to quaternary structure, the 26S proteasome consists of a 20S proteasome core and two 19S regulatory subunits. The 20S proteasome core is a barrel-shaped complex made of 28 subunits that are arranged in four stacked rings. The two outer rings are each formed by seven alpha subunits, and the two inner rings are formed by seven beta subunits. The proteolytic activity is exerted by three beta-subunits PSMB5, PSMB6 and PSMB7.

It localises to the cytoplasm. The protein resides in the nucleus. It carries out the reaction Cleavage of peptide bonds with very broad specificity.. In terms of biological role, component of the 20S core proteasome complex involved in the proteolytic degradation of most intracellular proteins. This complex plays numerous essential roles within the cell by associating with different regulatory particles. Associated with two 19S regulatory particles, forms the 26S proteasome and thus participates in the ATP-dependent degradation of ubiquitinated proteins. The 26S proteasome plays a key role in the maintenance of protein homeostasis by removing misfolded or damaged proteins that could impair cellular functions, and by removing proteins whose functions are no longer required. Associated with the PA200 or PA28, the 20S proteasome mediates ubiquitin-independent protein degradation. This type of proteolysis is required in several pathways including spermatogenesis (20S-PA200 complex) or generation of a subset of MHC class I-presented antigenic peptides (20S-PA28 complex). Within the 20S core complex, PSMB7 displays a trypsin-like activity. The sequence is that of Proteasome subunit beta type-7 (Psmb7) from Rattus norvegicus (Rat).